A 202-amino-acid polypeptide reads, in one-letter code: MISRLRGTVLEKDLEDATIDVGGVGYRVNFSSLALGKLPAEGQPVDVRVRTVVREDAFDLFGFLTKGEEEVFLLLNSVSRVGPRLSLMVLSGMEVPELVAALSRGEVARLAKIHGVGKKTAERLVLELKDKVKTIHLEAVSRGTAPAAVSGAHADLVSALLNLGYKQPQAEKAADLASERLGAEATFQALFREALKALRSGG.

The tract at residues 1-64 is domain I; sequence MISRLRGTVL…EDAFDLFGFL (64 aa). The segment at 65–143 is domain II; the sequence is TKGEEEVFLL…TIHLEAVSRG (79 aa). Positions 143 to 147 are flexible linker; that stretch reads GTAPA. The domain III stretch occupies residues 148–202; that stretch reads AVSGAHADLVSALLNLGYKQPQAEKAADLASERLGAEATFQALFREALKALRSGG.

Belongs to the RuvA family. As to quaternary structure, homotetramer. Forms an RuvA(8)-RuvB(12)-Holliday junction (HJ) complex. HJ DNA is sandwiched between 2 RuvA tetramers; dsDNA enters through RuvA and exits via RuvB. An RuvB hexamer assembles on each DNA strand where it exits the tetramer. Each RuvB hexamer is contacted by two RuvA subunits (via domain III) on 2 adjacent RuvB subunits; this complex drives branch migration. In the full resolvosome a probable DNA-RuvA(4)-RuvB(12)-RuvC(2) complex forms which resolves the HJ.

The protein resides in the cytoplasm. In terms of biological role, the RuvA-RuvB-RuvC complex processes Holliday junction (HJ) DNA during genetic recombination and DNA repair, while the RuvA-RuvB complex plays an important role in the rescue of blocked DNA replication forks via replication fork reversal (RFR). RuvA specifically binds to HJ cruciform DNA, conferring on it an open structure. The RuvB hexamer acts as an ATP-dependent pump, pulling dsDNA into and through the RuvAB complex. HJ branch migration allows RuvC to scan DNA until it finds its consensus sequence, where it cleaves and resolves the cruciform DNA. The chain is Holliday junction branch migration complex subunit RuvA from Myxococcus xanthus (strain DK1622).